Consider the following 379-residue polypeptide: 3-dehydroquinate synthase (379 aa).

Belongs to the archaeal-type DHQ synthase family.

The enzyme catalyses 2-amino-2,3,7-trideoxy-D-lyxo-hept-6-ulosonate + NAD(+) + H2O = 3-dehydroquinate + NH4(+) + NADH + H(+). Its function is as follows. Catalyzes the oxidative deamination and cyclization of 2-amino-3,7-dideoxy-D-threo-hept-6-ulosonic acid (ADH) to yield 3-dehydroquinate (DHQ), which is fed into the canonical shikimic pathway of aromatic amino acid biosynthesis. This is 3-dehydroquinate synthase from Methanococcoides burtonii (strain DSM 6242 / NBRC 107633 / OCM 468 / ACE-M).